The sequence spans 429 residues: Argininosuccinate lyase (429 aa).

Belongs to the lyase 1 family. Argininosuccinate lyase subfamily.

The protein resides in the cytoplasm. It carries out the reaction 2-(N(omega)-L-arginino)succinate = fumarate + L-arginine. It participates in amino-acid biosynthesis; L-arginine biosynthesis; L-arginine from L-ornithine and carbamoyl phosphate: step 3/3. The protein is Argininosuccinate lyase of Pyrobaculum calidifontis (strain DSM 21063 / JCM 11548 / VA1).